A 735-amino-acid polypeptide reads, in one-letter code: Protein-associating with the carboxyl-terminal domain of ezrin (735 aa).

Residue glycine 2 is the site of N-myristoyl glycine attachment. The region spanning 2-245 (GSENSALKSY…LSTLLSHDFF (244 aa)) is the Protein kinase domain. HEAT repeat units follow at residues 194–249 (FGAL…RNDF), 285–323 (LIAS…NAPG), 333–370 (LFQS…HFTQ), and 372–409 (QLKK…LLGP). Serine 439 carries the post-translational modification Phosphoserine. Disordered regions lie at residues 505–545 (LSDV…ASIH) and 604–648 (VPLT…GLGL). Residues 528–538 (WPDWSEPEEPE) show a composition bias toward acidic residues. Residues 547–735 (WPREPCDVAE…EELAWEDNNW (189 aa)) form an interaction with EZR region. Serine 701 is subject to Phosphoserine.

This sequence belongs to the protein kinase superfamily. Interacts with EZR/VIL2 C-terminal domain. Post-translationally, may be myristoylated; myristoylation may target it to Golgi compartment.

It is found in the cytoplasm. The protein localises to the golgi apparatus. It localises to the cell projection. The protein resides in the lamellipodium. In terms of biological role, may play a role in regulating cell adhesion/migration complexes in migrating cells. The chain is Protein-associating with the carboxyl-terminal domain of ezrin (Scyl3) from Mus musculus (Mouse).